The sequence spans 1462 residues: MAPVHGDDSLSDSGSFVSSRARREKKSKKGRQEALERLKKAKAGEKYKYEVEDFTGVYEEVDEEQYSKLVQARQDDDWIVDDDGIGYVEDGREIFDDDLEDDALDADEKGKDGKARNKDKRNVKKLAVTKPNNIKSMFIACAGKKTADKAVDLSKDGLLGDILQDLNTETPQITPPPVMILKKKRSIGASPNPFSVHTATAVPSGKIASPVSRKEPPLTPVPLKRAEFAGDDVQVESTEEEQESGAMEFEDGDFDEPMEVEEVDLEPMAAKAWDKESEPAEEVKQEADSGKGTVSYLGSFLPDVSCWDIDQEGDSSFSVQEVQVDSSHLPLVKGADEEQVFHFYWLDAYEDQYNQPGVVFLFGKVWIESAETHVSCCVMVKNIERTLYFLPREMKIDLNTGKETGTPISMKDVYEEFDEKIATKYKIMKFKSKPVEKNYAFEIPDVPEKSEYLEVKYSAEMPQLPQDLKGETFSHVFGTNTSSLELFLMNRKIKGPCWLEVKSPQLLNQPVSWCKVEAMALKPDLVNVIKDVSPPPLVVMAFSMKTMQNAKNHQNEIIAMAALVHHSFALDKAAPKPPFQSHFCVVSKPKDCIFPYAFKEVIEKKNVKVEVAATERTLLGFFLAKVHKIDPDIIVGHNIYGFELEVLLQRINVCKAPHWSKIGRLKRSNMPKLGGRSGFGERNATCGRMICDVEISAKELIRCKSYHLSELVQQILKTERVVIPMENIQNMYSESSQLLYLLEHTWKDAKFILQIMCELNVLPLALQITNIAGNIMSRTLMGGRSERNEFLLLHAFYENNYIVPDKQIFRKPQQKLGDEDEEIDGDTNKYKKGRKKAAYAGGLVLDPKVGFYDKFILLLDFNSLYPSIIQEFNICFTTVQRVASEAQKVTEDGEQEQIPELPDPSLEMGILPREIRKLVERRKQVKQLMKQQDLNPDLILQYDIRQKALKLTANSMYGCLGFSYSRFYAKPLAALVTYKGREILMHTKEMVQKMNLEVIYGDTDSIMINTNSTNLEEVFKLGNKVKSEVNKLYKLLEIDIDGVFKSLLLLKKKKYAALVVEPTSDGNYVTKQELKGLDIVRRDWCDLAKDTGNFVIGQILSDQSRDTIVENIQKRLIEIGENVLNGSVPVSQFEINKALTKDPQDYPDKKSLPHVHVALWINSQGGRKVKAGDTVSYVICQDGSNLTASQRAYAPEQLQKQDNLTIDTQYYLAQQIHPVVARICEPIDGIDAVLIATWLGLDPTQFRVHHYHKDEENDALLGGPAQLTDEEKYRDCERFKCPCPTCGTENIYDNVFDGSGTDMEPSLYRCSNIDCKASPLTFTVQLSNKLIMDIRRFIKKYYDGWLICEEPTCRNRTRHLPLQFSRTGPLCPACMKATLQPEYSDKSLYTQLCFYRYIFDAECALEKLTTDHEKDKLKKQFFTPKVLQDYRKLKNTAEQFLSRSGYSEVNLSKLFAGCAVKS.

Disordered regions lie at residues 1–33 (MAPV…GRQE) and 98–123 (DLED…KRNV). The span at 20–29 (RARREKKSKK) shows a compositional bias: basic residues. The segment covering 106 to 116 (ADEKGKDGKAR) has biased composition (basic and acidic residues). Threonine 174 is subject to Phosphothreonine. Phosphoserine is present on residues serine 186, serine 190, and serine 209. Lysine 224 carries the N6-acetyllysine modification. The interval 232-251 (DVQVESTEEEQESGAMEFED) is disordered. Threonine 406 carries the phosphothreonine modification. The interval 650–715 (RINVCKAPHW…YHLSELVQQI (66 aa)) is DNA-binding. Lysine 970 carries the post-translational modification N6-succinyllysine. Residues 1245 to 1376 (QFRVHHYHKD…TGPLCPACMK (132 aa)) form a DNA-binding region. Zn(2+)-binding residues include cysteine 1283, cysteine 1286, cysteine 1310, cysteine 1315, cysteine 1348, cysteine 1353, cysteine 1371, and cysteine 1374. A CysA-type zinc finger spans residues 1283–1318 (CPTCGTENIYDNVFDGSGTDMEPSLYRCSNIDCKAS). A CysB motif motif is present at residues 1348-1374 (CEEPTCRNRTRHLPLQFSRTGPLCPAC).

This sequence belongs to the DNA polymerase type-B family. In terms of assembly, component of the alpha DNA polymerase complex (also known as the alpha DNA polymerase-primase complex) consisting of four subunits: the catalytic subunit POLA1, the regulatory subunit POLA2, and the primase complex subunits PRIM1 and PRIM2 respectively. Interacts with PARP1; this interaction functions as part of the control of replication fork progression. Interacts with MCM10 and WDHD1; these interactions recruit the polymerase alpha complex to the pre-replicative complex bound to DNA. Interacts with RPA1; this interaction stabilizes the replicative complex and reduces the misincorporation rate of DNA polymerase alpha by acting as a fidelity clamp. As to quaternary structure, (Microbial infection) Interacts with SV40 Large T antigen; this interaction allows viral DNA replication. (Microbial infection) Interacts with herpes simplex virus 1/HHV-1 replication origin-binding protein UL9. In terms of processing, a 165 kDa form is probably produced by proteolytic cleavage at Lys-124.

It is found in the nucleus. The protein resides in the cytoplasm. The protein localises to the cytosol. It catalyses the reaction DNA(n) + a 2'-deoxyribonucleoside 5'-triphosphate = DNA(n+1) + diphosphate. Autoinhibited in apo-primosome, where the zinc motif of POLA1 and oligonucleotide/olicosaccharide-binding domain of POLA2 are placed into the active site blocking RNA:DNA duplex entry. In terms of biological role, catalytic subunit of the DNA polymerase alpha complex (also known as the alpha DNA polymerase-primase complex) which plays an essential role in the initiation of DNA synthesis. During the S phase of the cell cycle, the DNA polymerase alpha complex (composed of a catalytic subunit POLA1, a regulatory subunit POLA2 and two primase subunits PRIM1 and PRIM2) is recruited to DNA at the replicative forks via direct interactions with MCM10 and WDHD1. The primase subunit of the polymerase alpha complex initiates DNA synthesis by oligomerising short RNA primers on both leading and lagging strands. These primers are initially extended by the polymerase alpha catalytic subunit and subsequently transferred to polymerase delta and polymerase epsilon for processive synthesis on the lagging and leading strand, respectively. The reason this transfer occurs is because the polymerase alpha has limited processivity and lacks intrinsic 3' exonuclease activity for proofreading error, and therefore is not well suited for replicating long complexes. In the cytosol, responsible for a substantial proportion of the physiological concentration of cytosolic RNA:DNA hybrids, which are necessary to prevent spontaneous activation of type I interferon responses. This chain is DNA polymerase alpha catalytic subunit (POLA1), found in Homo sapiens (Human).